Here is a 394-residue protein sequence, read N- to C-terminus: Mitogen-activated protein kinase 2 (394 aa).

The span at 1-10 (MDGPAQQTDT) shows a compositional bias: polar residues. The segment at 1-27 (MDGPAQQTDTVMAEAAAAQQPAPPSQP) is disordered. The region spanning 61 to 346 (KPPIMPIGKG…VEDALAHPYL (286 aa)) is the Protein kinase domain. ATP-binding positions include 67-75 (IGKGAYGIV) and Lys90. The Proton acceptor role is filled by Asp187. Thr219 is subject to Phosphothreonine. A TXY motif is present at residues 219 to 221 (TEY). At Tyr221 the chain carries Phosphotyrosine. The residue at position 224 (Thr224) is a Phosphothreonine.

The protein belongs to the protein kinase superfamily. CMGC Ser/Thr protein kinase family. MAP kinase subfamily. The cofactor is Mg(2+). Post-translationally, activated by cold, wounding and UV-C in a cultivar-dependent manner; phosphorylated at Tyr-221 in cv. Subicho but not in cv. Pungchon. Expressed constitutively in roots, stems, flowers and fruits of the hot pepper (cv. Subicho).

It catalyses the reaction L-seryl-[protein] + ATP = O-phospho-L-seryl-[protein] + ADP + H(+). The catalysed reaction is L-threonyl-[protein] + ATP = O-phospho-L-threonyl-[protein] + ADP + H(+). Activated by threonine and tyrosine phosphorylation. Functionally, protein kinase involved in oxidative stress-mediated and innate immune MAP kinase signaling cascades. In Capsicum annuum (Capsicum pepper), this protein is Mitogen-activated protein kinase 2.